The following is a 298-amino-acid chain: Protoheme IX farnesyltransferase (298 aa).

The next 8 helical transmembrane spans lie at 16–36, 45–65, 97–117, 141–161, 172–192, 223–243, 244–264, and 277–297; these read VVAL…PGMP, ALGF…NQLL, VLIV…TAVL, IVIG…AVTG, SLLV…LAIF, VLLA…VFYL, GGAV…LDPP, and VVYL…LPWV.

Belongs to the UbiA prenyltransferase family. Protoheme IX farnesyltransferase subfamily.

It is found in the cell inner membrane. The catalysed reaction is heme b + (2E,6E)-farnesyl diphosphate + H2O = Fe(II)-heme o + diphosphate. Its pathway is porphyrin-containing compound metabolism; heme O biosynthesis; heme O from protoheme: step 1/1. Functionally, converts heme B (protoheme IX) to heme O by substitution of the vinyl group on carbon 2 of heme B porphyrin ring with a hydroxyethyl farnesyl side group. The protein is Protoheme IX farnesyltransferase of Xanthomonas campestris pv. campestris (strain 8004).